A 208-amino-acid chain; its full sequence is Outer-membrane lipoprotein carrier protein (208 aa).

The signal sequence occupies residues 1–22 (MKKRLCAVLLASPLLFSAAVFA).

Belongs to the LolA family. As to quaternary structure, monomer.

Its subcellular location is the periplasm. Participates in the translocation of lipoproteins from the inner membrane to the outer membrane. Only forms a complex with a lipoprotein if the residue after the N-terminal Cys is not an aspartate (The Asp acts as a targeting signal to indicate that the lipoprotein should stay in the inner membrane). This chain is Outer-membrane lipoprotein carrier protein, found in Shewanella baltica (strain OS223).